We begin with the raw amino-acid sequence, 133 residues long: Small ribosomal subunit protein uS8 (133 aa).

The protein belongs to the universal ribosomal protein uS8 family. As to quaternary structure, part of the 30S ribosomal subunit. Contacts proteins S5 and S12.

Its function is as follows. One of the primary rRNA binding proteins, it binds directly to 16S rRNA central domain where it helps coordinate assembly of the platform of the 30S subunit. The protein is Small ribosomal subunit protein uS8 of Mycoplasmoides gallisepticum (strain R(low / passage 15 / clone 2)) (Mycoplasma gallisepticum).